Here is a 24-residue protein sequence, read N- to C-terminus: Humanin-like 10 (24 aa).

This sequence belongs to the humanin family. Expressed in mature brain, thyroid gland and testis.

It is found in the secreted. The protein resides in the cytoplasm. Plays a role as a neuroprotective and antiapoptotic factor. This is Humanin-like 10 from Homo sapiens (Human).